A 204-amino-acid polypeptide reads, in one-letter code: FMN-dependent NADH:quinone oxidoreductase (204 aa).

FMN contacts are provided by residues Ser-10, 15-17 (SLS), and 139-142 (TSGG).

This sequence belongs to the azoreductase type 1 family. Homodimer. The cofactor is FMN.

It carries out the reaction 2 a quinone + NADH + H(+) = 2 a 1,4-benzosemiquinone + NAD(+). The enzyme catalyses N,N-dimethyl-1,4-phenylenediamine + anthranilate + 2 NAD(+) = 2-(4-dimethylaminophenyl)diazenylbenzoate + 2 NADH + 2 H(+). Functionally, quinone reductase that provides resistance to thiol-specific stress caused by electrophilic quinones. In terms of biological role, also exhibits azoreductase activity. Catalyzes the reductive cleavage of the azo bond in aromatic azo compounds to the corresponding amines. The chain is FMN-dependent NADH:quinone oxidoreductase from Rhizobium leguminosarum bv. trifolii (strain WSM2304).